Here is a 770-residue protein sequence, read N- to C-terminus: Amyloid-beta precursor protein (770 aa).

An N-terminal signal peptide occupies residues 1 to 17 (MLPSLALLLLAAWTVRA). Residues 18-701 (LEVPTDGNAG…AEDVGSNKGA (684 aa)) are Extracellular-facing. The segment at 28-123 (LLAEPQIAMF…PYRCLVGEFV (96 aa)) is GFLD subdomain. The region spanning 28–189 (LLAEPQIAMF…RGVEFVCCPL (162 aa)) is the E1 domain. Intrachain disulfides connect Cys38–Cys62, Cys73–Cys117, Cys98–Cys105, Cys133–Cys187, Cys144–Cys174, and Cys158–Cys186. 96-110 (NWCKRGRKQCKTHTH) provides a ligand contact to heparin. The interval 131 to 189 (DKCKFLHQERMDVCETHLHWHTVAKETCSEKSTNLHDYGMLLPCGIDKFRGVEFVCCPL) is cuBD subdomain. Residues 135–155 (FLHQERMDVCETHLHWHTVAK) are copper-binding. His147, His151, and Tyr168 together coordinate Cu(2+). Residues 181 to 188 (GVEFVCCP) are zinc-binding. Glu183, Cys186, and Cys187 together coordinate Zn(2+). The span at 196-207 (IDSADAEEDDSD) shows a compositional bias: acidic residues. The disordered stretch occupies residues 196 to 283 (IDSADAEEDD…TTTTTTTESV (88 aa)). Residue Ser198 is modified to Phosphoserine; by CK2. Ser206 bears the Phosphoserine; by CK1 mark. Sulfotyrosine occurs at positions 217 and 262. Acidic residues predominate over residues 228 to 264 (VAEEEEVADVEEEEAEDDEDVEDGDEVEEEAEEPYEE). Low complexity predominate over residues 268 to 281 (RTTSIATTTTTTTE). 3 cysteine pairs are disulfide-bonded: Cys291–Cys341, Cys300–Cys324, and Cys316–Cys337. The BPTI/Kunitz inhibitor domain maps to 291-341 (CSEQAETGPCRAMISRWYFDVTEGKCAPFFYGGCGGNRNNFDTEEYCMAVC). Sulfotyrosine is present on Tyr336. The short motif at 344–365 (VSSQSLLKTTSEPLPQDPVKLP) is the OX-2 element. Residues 374-565 (AVDKYLETPG…EEIQDEVDEL (192 aa)) enclose the E2 domain. The interval 391 to 423 (FQKAKERLEAKHRERMSQVMREWEEAERQAKNL) is heparin-binding. Phosphoserine is present on Ser441. The heparin-binding stretch occupies residues 491-522 (FNMLKKYVRAEQKDRQHTLKHFEHVRMVDPKK). Tyr497 is modified (phosphotyrosine). The tract at residues 523–540 (AAQIRSQVMTHLRVIYER) is collagen-binding. Asn542 and Asn571 each carry an N-linked (GlcNAc...) asparagine glycan. O-linked (Xyl...) (chondroitin sulfate) serine; in L-APP isoforms glycosylation occurs at Ser656. Residues His677 and His685 each contribute to the Cu(2+) site. Residues His677 and His685 each coordinate Zn(2+). Positions 695 to 722 (VGSNKGAIIGLMVGGVVIATVIVITLVM) are interaction with PSEN1. Residues 702 to 722 (IIGLMVGGVVIATVIVITLVM) form a helical membrane-spanning segment. Topologically, residues 723–770 (LKKKQYTSIHHGVVEVDAAVTPEERHLSKMQQNGYENPTYKFFEQMQN) are cytoplasmic. Residues 724–734 (KKKQYTSIHHG) carry the Basolateral sorting signal motif. Position 729 is a phosphothreonine (Thr729). At Ser730 the chain carries Phosphoserine; by APP-kinase I. Residues 732–751 (HHGVVEVDAAVTPEERHLSK) are interaction with G(o)-alpha. Phosphothreonine; by CDK5 and MAPK10 is present on Thr743. The tract at residues 756-770 (GYENPTYKFFEQMQN) is required for the interaction with KIF5B and for anterograde transport in axons. Phosphotyrosine; by ABL1 is present on Tyr757. The YENPXY motif; contains endocytosis signal signature appears at 757 to 762 (YENPTY). Residue Lys763 forms a Glycyl lysine isopeptide (Lys-Gly) (interchain with G-Cter in ubiquitin) linkage.

The protein belongs to the APP family. Binds, via its C-terminus, to the PID domain of several cytoplasmic proteins, including APBB family members, the APBA family, MAPK8IP1, SHC1 and NUMB and DAB1. Binding to DAB1 inhibits its serine phosphorylation. Interacts (via NPXY motif) with DAB2 (via PID domain); the interaction is impaired by tyrosine phosphorylation of the NPXY motif. Also interacts with GPCR-like protein BPP, APPBP1, IB1, KNS2 (via its TPR domains), APPBP2 (via BaSS) and DDB1. In vitro, it binds MAPT via the MT-binding domains. Associates with microtubules in the presence of ATP and in a kinesin-dependent manner. Interacts, through a C-terminal domain, with GNAO1. Amyloid-beta protein 42 binds CHRNA7 in hippocampal neurons. Amyloid-beta associates with HADH2. Interacts with CPEB1, ANKS1B and AGER. Interacts with ITM2B. Interacts with ITM2C. Interacts with IDE. Can form homodimers; dimerization is enhanced in the presence of Cu(2+) ions. Can form homodimers; this is promoted by heparin binding. Amyloid-beta protein 40 interacts with S100A9. CTF-alpha product of APP interacts with GSAP. Isoform APP695 interacts with SORL1 (via N-terminal ectodomain); this interaction retains APP in the trans-Golgi network and reduces processing into soluble APP-alpha and amyloid-beta peptides. The C99 fragment also interacts with SORL1. Isoform APP751 interacts with SORL1. Isoform APP770 interacts with SORL1. Interacts with PLD3. Interacts with VDAC1. Interacts with NSG1; could regulate APP processing. Amyloid-beta protein 42 interacts with FPR2. Interacts with SYT7. Interacts (via transmembrane region) with PSEN1; the interaction is direct. Interacts with LRRK2. Interacts (via cytoplasmic domain) with KIF5B. Interacts (via C-terminus) with APBB2/FE65L1 (via C-terminus). Interacts (via intracellular domain) with APBB3. Post-translationally, proteolytically processed under normal cellular conditions. Cleavage either by alpha-secretase, beta-secretase or theta-secretase leads to generation and extracellular release of soluble APP peptides, S-APP-alpha and S-APP-beta, and the retention of corresponding membrane-anchored C-terminal fragments, C80, C83 and C99. Subsequent processing of C80 and C83 by gamma-secretase yields P3 peptides. This is the major secretory pathway and is non-amyloidogenic. Alternatively, presenilin/nicastrin-mediated gamma-secretase processing of C99 releases the amyloid-beta proteins, amyloid-beta protein 40 and amyloid-beta protein 42, major components of amyloid plaques, and the cytotoxic C-terminal fragments, gamma-CTF(50), gamma-CTF(57) and gamma-CTF(59). PSEN1 cleavage is more efficient with C83 than with C99 as substrate (in vitro). Amyloid-beta protein 40 and Amyloid-beta protein 42 are cleaved by ACE. Many other minor amyloid-beta peptides, amyloid-beta 1-X peptides, are found in cerebral spinal fluid (CSF) including the amyloid-beta X-15 peptides, produced from the cleavage by alpha-secretase. Proteolytically cleaved by caspases during neuronal apoptosis. Cleavage at Asp-739 by either caspase-3, -8 or -9 results in the production of the neurotoxic C31 peptide and the increased production of amyloid-beta peptides. In terms of processing, N-glycosylated. Post-translationally, O-glycosylated. O-linkage of chondroitin sulfate to the L-APP isoforms produces the APP proteoglycan core proteins, the appicans. The chondroitin sulfate chain of appicans contains 4-O-sulfated galactose in the linkage region and chondroitin sulfate E in the repeated disaccharide region. Phosphorylation in the C-terminal on tyrosine, threonine and serine residues is neuron-specific. Phosphorylation can affect APP processing, neuronal differentiation and interaction with other proteins. Phosphorylated on Thr-743 in neuronal cells by Cdc5 kinase and Mapk10, in dividing cells by Cdc2 kinase in a cell-cycle dependent manner with maximal levels at the G2/M phase and, in vitro, by GSK-3-beta. The Thr-743 phosphorylated form causes a conformational change which reduces binding of Fe65 family members. In dopaminergic (DA) neurons, phosphorylation on Thr-743 by LRKK2 promotes the production and the nuclear translocation of the APP intracellular domain (AICD) which induces DA neuron apoptosis. Phosphorylation on Tyr-757 is required for SHC binding. Phosphorylated in the extracellular domain by casein kinases on both soluble and membrane-bound APP. This phosphorylation is inhibited by heparin. In terms of processing, extracellular binding and reduction of copper, results in a corresponding oxidation of Cys-144 and Cys-158, and the formation of a disulfide bond. Post-translationally, trophic-factor deprivation triggers the cleavage of surface APP by beta-secretase to release sAPP-beta which is further cleaved to release an N-terminal fragment of APP (N-APP). Amyloid-beta peptides are degraded by IDE. In terms of processing, sulfated on tyrosine residues. Expressed in the brain. In the brain, non-L-APP isoforms are expressed in neurons, isoform APP695 being the predominant form. In astrocytes and microglial cells, almost 50% is L-isoform (appican).

The protein resides in the cell membrane. It localises to the membrane. Its subcellular location is the perikaryon. It is found in the cell projection. The protein localises to the growth cone. The protein resides in the clathrin-coated pit. It localises to the early endosome. Its subcellular location is the cytoplasmic vesicle. It is found in the endoplasmic reticulum. The protein localises to the golgi apparatus. The protein resides in the cell surface. It localises to the nucleus. Its subcellular location is the cytoplasm. It is found in the secreted. Functions as a cell surface receptor and performs physiological functions on the surface of neurons relevant to neurite growth, neuronal adhesion and axonogenesis. Interaction between APP molecules on neighboring cells promotes synaptogenesis. Involved in cell mobility and transcription regulation through protein-protein interactions. Can promote transcription activation through binding to APBB1-KAT5 and inhibit Notch signaling through interaction with Numb. Couples to apoptosis-inducing pathways such as those mediated by G(o) and JIP. Inhibits G(o)-alpha ATPase activity. Acts as a kinesin I membrane receptor, mediating the axonal transport of beta-secretase and presenilin 1. By acting as a kinesin I membrane receptor, plays a role in axonal anterograde transport of cargo towards synapses in axons. May be involved in copper homeostasis/oxidative stress through copper ion reduction. Can regulate neurite outgrowth through binding to components of the extracellular matrix such as heparin and collagen I and IV. The splice isoforms that contain the BPTI domain possess protease inhibitor activity. Induces a AGER-dependent pathway that involves activation of p38 MAPK, resulting in internalization of amyloid-beta peptide and leading to mitochondrial dysfunction in cultured mitochondrial dysfunction in cultured cortical neurons. Provides Cu(2+) ions for GPC1 which are required for release of nitric oxide (NO) and subsequent degradation of the heparan sulfate chains on GPC1. Functionally, amyloid-beta peptides are lipophilic metal chelators with metal-reducing activity. Binds transient metals such as copper, zinc and iron. Rat and mouse amyloid-beta peptides bind only weakly transient metals and have little reducing activity due to substitutions of transient metal chelating residues. Amyloid-beta protein 42 may activate mononuclear phagocytes in the brain and elicits inflammatory responses. Promotes both tau aggregation and TPK II-mediated phosphorylation. Also binds GPC1 in lipid rafts. In terms of biological role, appicans elicit adhesion of neural cells to the extracellular matrix and may regulate neurite outgrowth in the brain. Its function is as follows. The gamma-CTF peptides as well as the caspase-cleaved peptides, including C31, are potent enhancers of neuronal apoptosis. The protein is Amyloid-beta precursor protein of Rattus norvegicus (Rat).